A 657-amino-acid chain; its full sequence is Zinc transporter ZIP4 (657 aa).

An N-terminal signal peptide occupies residues 1–22 (MMLPKSLTQGLLLAMLVGTAAM). The Extracellular portion of the chain corresponds to 23–335 (VQPYHLLSLL…QDQLSQAERY (313 aa)). N-linked (GlcNAc...) asparagine glycosylation is found at Asn193, Asn220, and Asn268. Residues 336–356 (LYGSLATLLICLCAVFGLLLL) form a helical membrane-spanning segment. The Cytoplasmic segment spans residues 357 to 374 (TCAKCSTATHYIMQTFLS). Residues 375 to 395 (LAVGALTGDALLHLIPKVLGL) form a helical membrane-spanning segment. Topologically, residues 396-417 (HTHSGEVHSHEEESIGGQSTWR) are extracellular. The chain crosses the membrane as a helical span at residues 418 to 438 (LLAVLGGFYIFFLFESFFNLL). Over 439–508 (LPRDQDHEKD…LRAELRMLPY (70 aa)) the chain is Cytoplasmic. Residues 462 to 464 (LQL) carry the Essential for SLC39A4 endocytosis motif. The disordered stretch occupies residues 467-491 (SNLRQSKQPHESSRSDLVTEETPEL). A helical transmembrane segment spans residues 509-528 (LITLGDAVHNFADGLAVGAA). Positions 517, 518, and 521 each coordinate Zn(2+). The Extracellular segment spans residues 529–536 (FSSTWKTG). A helical membrane pass occupies residues 537–563 (LATSLAVFCHELPHELGDFAALLHAGL). Zn(2+) contacts are provided by His546, Glu547, and His550. At 564 to 568 (TVKRA) the chain is on the cytoplasmic side. The chain crosses the membrane as a helical span at residues 569–589 (LLLNLASALTAFAGLYVALAV). Over 590 to 597 (GVGEEGET) the chain is Extracellular. Residues 598–618 (WILAVATGLFLYVALCDMLPA) traverse the membrane as a helical segment. Residues 619–627 (MMNVRDQRP) lie on the Cytoplasmic side of the membrane. A helical membrane pass occupies residues 628 to 648 (WLLFLLHNVGLLGGWTILLLL). Over 649-657 (SLYEDSITF) the chain is Extracellular.

It belongs to the ZIP transporter (TC 2.A.5) family. In terms of assembly, homodimer; homodimerization is mediated by the transmembrane domain. The extracellular N-terminal ectodomain is cleaved when cells are Zn(2+) deficient, N-terminally cleaved SLC39A4 is internalized at a faster rate. Post-translationally, under excess Zn(2+) conditions, SLC39A4 on the cell surface is rapidly endocytosed, ubiquitinated and degraded. In terms of processing, glycosylated. Expressed in duodenum, jejunum, and ileum.

It is found in the cell membrane. Its subcellular location is the recycling endosome membrane. The protein localises to the apical cell membrane. It catalyses the reaction Zn(2+)(in) = Zn(2+)(out). In terms of biological role, selective transporter that mediates the uptake of Zn(2+). Plays an essential role for dietary zinc uptake from small intestine. The Zn(2+) uniporter activity is regulated by zinc availability. Also exhibits polyspecific binding and transport of Cu(2+), Cd(2+) and possibly Ni(2+) but at higher concentrations. In Rattus norvegicus (Rat), this protein is Zinc transporter ZIP4 (Slc39a4).